A 440-amino-acid polypeptide reads, in one-letter code: Putative F-box/LRR-repeat protein At5g15620 (440 aa).

An F-box domain is found at 1–52 (MDRFSNLPDDVIYHIVSFLSAKEATCLKFVSKNFQNLVTIKRNVVFHHWESF). LRR repeat units follow at residues 4–31 (FSNLPDDVIYHIVSFLSAKEATCLKFVS), 126–153 (LKLGCGFVIDILPKNALLPALKTLILDS), 156–181 (FYASDGCAFTRLLSASPVLEELVIDR), 194–205 (SSPTLKRLTLRR), 210–235 (PEPETWTDFESVSFDTPSLAYLKYKD), 264–289 (YWLNRSADPSNLIRGLKNVEILSIKV), and 318–343 (EADFCWDPLQILLEKSPNLKTLTIEG).

This chain is Putative F-box/LRR-repeat protein At5g15620, found in Arabidopsis thaliana (Mouse-ear cress).